The chain runs to 827 residues: Periplasmic nitrate reductase (827 aa).

Positions 1 to 32 (MELSRRDFMKANAAVAAAAAAGIVLPVKNVQA) form a signal peptide, tat-type signal. A 4Fe-4S Mo/W bis-MGD-type domain is found at 37–93 (IKWDKAPCRFCGTGCSVLVGTKDGRVVATQGDPDAEVNRGLNCIKGYFLSKIMYGAD). The [4Fe-4S] cluster site is built by C44, C47, C51, and C79. Mo-bis(molybdopterin guanine dinucleotide) is bound by residues K81, Q148, N173, C177, 210–217 (WGSNMAEM), 241–245 (STFEH), M371, Q375, N481, 507–508 (SD), K530, D557, and 717–726 (TGRVLEHWHT). A substrate-binding site is contributed by F793. Mo-bis(molybdopterin guanine dinucleotide) contacts are provided by N801 and K818.

The protein belongs to the prokaryotic molybdopterin-containing oxidoreductase family. NasA/NapA/NarB subfamily. In terms of assembly, component of the periplasmic nitrate reductase NapAB complex composed of NapA and NapB. Requires [4Fe-4S] cluster as cofactor. Mo-bis(molybdopterin guanine dinucleotide) is required as a cofactor. Predicted to be exported by the Tat system. The position of the signal peptide cleavage has not been experimentally proven.

Its subcellular location is the periplasm. It catalyses the reaction 2 Fe(II)-[cytochrome] + nitrate + 2 H(+) = 2 Fe(III)-[cytochrome] + nitrite + H2O. Catalytic subunit of the periplasmic nitrate reductase complex NapAB. Receives electrons from NapB and catalyzes the reduction of nitrate to nitrite. This is Periplasmic nitrate reductase from Haemophilus ducreyi (strain 35000HP / ATCC 700724).